The primary structure comprises 447 residues: UPF0210 protein Ldb1026 (447 aa).

It belongs to the UPF0210 family. As to quaternary structure, homodimer.

This Lactobacillus delbrueckii subsp. bulgaricus (strain ATCC 11842 / DSM 20081 / BCRC 10696 / JCM 1002 / NBRC 13953 / NCIMB 11778 / NCTC 12712 / WDCM 00102 / Lb 14) protein is UPF0210 protein Ldb1026.